Reading from the N-terminus, the 396-residue chain is Formate-dependent phosphoribosylglycinamide formyltransferase (396 aa).

N(1)-(5-phospho-beta-D-ribosyl)glycinamide-binding positions include 25–26 and Glu-85; that span reads EL. ATP-binding positions include Arg-117, Lys-158, 163–168, 198–201, and Glu-206; these read SSGKGQ and EAFI. The 190-residue stretch at 122-311 folds into the ATP-grasp domain; the sequence is RLAAETLAIP…EFALHVRAIL (190 aa). Mg(2+) is bound by residues Glu-270 and Glu-282. N(1)-(5-phospho-beta-D-ribosyl)glycinamide is bound by residues Asp-289, Lys-359, and 366 to 367; that span reads RR.

Belongs to the PurK/PurT family. In terms of assembly, homodimer.

The catalysed reaction is N(1)-(5-phospho-beta-D-ribosyl)glycinamide + formate + ATP = N(2)-formyl-N(1)-(5-phospho-beta-D-ribosyl)glycinamide + ADP + phosphate + H(+). It functions in the pathway purine metabolism; IMP biosynthesis via de novo pathway; N(2)-formyl-N(1)-(5-phospho-D-ribosyl)glycinamide from N(1)-(5-phospho-D-ribosyl)glycinamide (formate route): step 1/1. Functionally, involved in the de novo purine biosynthesis. Catalyzes the transfer of formate to 5-phospho-ribosyl-glycinamide (GAR), producing 5-phospho-ribosyl-N-formylglycinamide (FGAR). Formate is provided by PurU via hydrolysis of 10-formyl-tetrahydrofolate. This is Formate-dependent phosphoribosylglycinamide formyltransferase from Shewanella frigidimarina (strain NCIMB 400).